A 618-amino-acid chain; its full sequence is Glucose starvation modulator protein 1 (618 aa).

Positions 20-48 (CEFCHTKHIQCDVGRPCQNCLKRNIGKFC) form a DNA-binding region, zn(2)-C6 fungal-type. Residues 325–352 (ANANTHPSHNAKLESECDSSSHSDADLE) are disordered. Positions 335–352 (AKLESECDSSSHSDADLE) are enriched in basic and acidic residues. The PAS domain occupies 466–538 (LLDLENMAKL…QIFNELLAFG (73 aa)).

This sequence belongs to the ERT1/acuK family.

Its subcellular location is the nucleus. Functionally, transcription factor which regulates nonfermentable carbon utilization. Binds specifically to 5'-CGGN(8)CGG-3' and 5'-CGGN(9)CGG-3' sequences in the promoter region. This Saccharomyces cerevisiae (strain RM11-1a) (Baker's yeast) protein is Glucose starvation modulator protein 1 (GSM1).